Reading from the N-terminus, the 351-residue chain is Protein-glutamate methylesterase/protein-glutamine glutaminase 2 (351 aa).

One can recognise a Response regulatory domain in the interval 5–122; that stretch reads RVICVDDSAL…RDGLLDYSEL (118 aa). Asp-56 bears the 4-aspartylphosphate mark. In terms of domain architecture, CheB-type methylesterase spans 154–341; it reads LNSSEKLVIL…PLPAMSERIL (188 aa). Active-site residues include Ser-166, His-192, and Asp-289.

This sequence belongs to the CheB family. Post-translationally, phosphorylated by CheA. Phosphorylation of the N-terminal regulatory domain activates the methylesterase activity.

The protein resides in the cytoplasm. The enzyme catalyses [protein]-L-glutamate 5-O-methyl ester + H2O = L-glutamyl-[protein] + methanol + H(+). It catalyses the reaction L-glutaminyl-[protein] + H2O = L-glutamyl-[protein] + NH4(+). Functionally, involved in chemotaxis. Part of a chemotaxis signal transduction system that modulates chemotaxis in response to various stimuli. Catalyzes the demethylation of specific methylglutamate residues introduced into the chemoreceptors (methyl-accepting chemotaxis proteins or MCP) by CheR. Also mediates the irreversible deamidation of specific glutamine residues to glutamic acid. The sequence is that of Protein-glutamate methylesterase/protein-glutamine glutaminase 2 from Bordetella avium (strain 197N).